The chain runs to 339 residues: MIELFFEYIFPLIIIALKVVAITIPLILCVAYLTYAERRVIGLMQLRCGPNVVGPFGLLQPIADAVKLLFKEPIIPTNADKILFVLAPMITFILSLIGWAVIPFAKGVVLADINVGVLYILAISSLSVYGIIIAGWASNSKYAFLGAIRSSAQMISYEVSMGLVIITVLLTTGTLNLSQIVEAQRTMPWWIDLMLMPMGVVFFISVLAETNRLPFDLPEAESELVAGYNVEYSSMGFALFFLGEYANMILVSAMTTTFFLGGYLPPFNISWLDCIPGFFWFVFKVGFLLFCFLWIRATLPRYRYDQLMRLGWKVFLPLTLFWVVLVSSVLIYTDHLPNV.

8 helical membrane passes run 9 to 29 (IFPLIIIALKVVAITIPLILC), 82 to 102 (ILFVLAPMITFILSLIGWAVI), 115 to 135 (VGVLYILAISSLSVYGIIIAG), 161 to 181 (MGLVIITVLLTTGTLNLSQIV), 187 to 207 (MPWWIDLMLMPMGVVFFISVL), 235 to 255 (MGFALFFLGEYANMILVSAMT), 275 to 295 (IPGFFWFVFKVGFLLFCFLWI), and 311 to 331 (GWKVFLPLTLFWVVLVSSVLI).

Belongs to the complex I subunit 1 family. NDH-1 is composed of 14 different subunits. Subunits NuoA, H, J, K, L, M, N constitute the membrane sector of the complex.

It is found in the cell inner membrane. The catalysed reaction is a quinone + NADH + 5 H(+)(in) = a quinol + NAD(+) + 4 H(+)(out). Functionally, NDH-1 shuttles electrons from NADH, via FMN and iron-sulfur (Fe-S) centers, to quinones in the respiratory chain. The immediate electron acceptor for the enzyme in this species is believed to be ubiquinone. Couples the redox reaction to proton translocation (for every two electrons transferred, four hydrogen ions are translocated across the cytoplasmic membrane), and thus conserves the redox energy in a proton gradient. This subunit may bind ubiquinone. This Rickettsia bellii (strain OSU 85-389) protein is NADH-quinone oxidoreductase subunit H.